Consider the following 82-residue polypeptide: uncharacterized protein (82 aa).

This is an uncharacterized protein from Methanocaldococcus jannaschii (strain ATCC 43067 / DSM 2661 / JAL-1 / JCM 10045 / NBRC 100440) (Methanococcus jannaschii).